The primary structure comprises 517 residues: GMP synthase [glutamine-hydrolyzing] (517 aa).

In terms of domain architecture, Glutamine amidotransferase type-1 spans 11-202 (KIIVLDYGSQ…AFDICKAEAN (192 aa)). The Nucleophile role is filled by C88. Catalysis depends on residues H176 and E178. The region spanning 203-392 (WSMDDFITKQ…LGMPHALVWR (190 aa)) is the GMPS ATP-PPase domain. ATP is bound at residue 230 to 236 (SGGVDSS).

Homodimer.

The catalysed reaction is XMP + L-glutamine + ATP + H2O = GMP + L-glutamate + AMP + diphosphate + 2 H(+). It participates in purine metabolism; GMP biosynthesis; GMP from XMP (L-Gln route): step 1/1. Catalyzes the synthesis of GMP from XMP. In Lacticaseibacillus casei (strain BL23) (Lactobacillus casei), this protein is GMP synthase [glutamine-hydrolyzing].